Reading from the N-terminus, the 324-residue chain is Esterase FPSE_08126 (324 aa).

Residues S156, D255, and H285 contribute to the active site.

Belongs to the AB hydrolase 3 family.

Functionally, esterase; part of the Fusarium detoxification of benzoxazolinone cluster involved in the degradation of benzoxazolinones produced by the host plant. Maize, wheat, and rye produce the 2 benzoxazinone phytoanticipins 2,4-dihy-droxy-7-methoxy-1,4-benzoxazin-3-one (DIMBOA) and 2,4-dihydroxy-1,4-benzoxazin-3-one (DIBOA) that, due to their inherent instability once released, spontaneously degrade to the more stable corresponding benzoxazolinones, 6-methoxy-2-benzoxazolinone (MBOA) and 2-benzoxazolinone (BOA), respectively. The first step in the detoxification of benzoxazolinones involves the hydrolysis of the cyclic ester bond of benzoxazolinones by the gamma-lactamase FDB1 to aminophenols. FDB1 is able to convert 2-benzoxazolinone (BOA) into 2-aminophenol (2-AP), as well as 6-methoxy-2-benzoxazolinone (MBOA) into 5-methoxy-2-aminophenol (2-AMP). The N-malonyltransferase FDB2 then metabolizes aminophenols via N-malonylation to non-toxic malonamic acids. FDB2 converts 2-AP into N-(2-hydroxyphenyl) malonamic acid (HPMA) and 2-AMP into N-(2-hydroxy-4-methoxyphenyl) malonamic acid (HMPMA). The cluster also contains 2 transcription factors (FDB3 and FPSE_08121), an aldo-keto reductase (FPSE_08125) that possibly associates with a ketone component of BOA and MBOA degradation, an esterase (FPSE_08126), an acyl-CoA transferase (FPSE_08120), a solute carrier protein (FPSE_08119) and a transmembrane transporter (FPSE_08127) proposed to shuttle metabolites of benzoxazolinone degradation. The sequence is that of Esterase FPSE_08126 from Fusarium pseudograminearum (strain CS3096) (Wheat and barley crown-rot fungus).